Consider the following 339-residue polypeptide: Phenylalanine--tRNA ligase alpha subunit (339 aa).

E250 is a binding site for Mg(2+).

This sequence belongs to the class-II aminoacyl-tRNA synthetase family. Phe-tRNA synthetase alpha subunit type 1 subfamily. Tetramer of two alpha and two beta subunits. Mg(2+) serves as cofactor.

Its subcellular location is the cytoplasm. The enzyme catalyses tRNA(Phe) + L-phenylalanine + ATP = L-phenylalanyl-tRNA(Phe) + AMP + diphosphate + H(+). This Bacteroides thetaiotaomicron (strain ATCC 29148 / DSM 2079 / JCM 5827 / CCUG 10774 / NCTC 10582 / VPI-5482 / E50) protein is Phenylalanine--tRNA ligase alpha subunit.